The sequence spans 162 residues: Phospholipase A and acyltransferase 3 (162 aa).

The Cytoplasmic portion of the chain corresponds to methionine 1–alanine 133. Positions leucine 13–glutamine 129 constitute an LRAT domain. Residues histidine 23 and histidine 35 contribute to the active site. The active-site Acyl-thioester intermediate is the cysteine 113. The chain crosses the membrane as a helical span at residues valine 134–leucine 154. At serine 155–glutamine 162 the chain is on the lumenal side.

The protein belongs to the H-rev107 family. In terms of assembly, interacts with PPP2R1A; this interaction might decrease PP2A activity. In terms of tissue distribution, ubiquitously expressed in normal tissues but down-regulated in primary carcinomas or in many cell lines derived from tumors. Highly expressed in white adipose tissue and in adipocytes. Expressed at lower levels in brown adipose tissue.

Its subcellular location is the cell membrane. It is found in the cytoplasm. The protein localises to the cytosol. The protein resides in the perinuclear region. It localises to the peroxisome membrane. Its subcellular location is the mitochondrion membrane. It is found in the nucleus envelope. The protein localises to the lysosome membrane. The protein resides in the endoplasmic reticulum membrane. It catalyses the reaction a 1,2-diacyl-sn-glycero-3-phosphocholine + H2O = a 1-acyl-sn-glycero-3-phosphocholine + a fatty acid + H(+). The catalysed reaction is a 1,2-diacyl-sn-glycero-3-phosphocholine + H2O = a 2-acyl-sn-glycero-3-phosphocholine + a fatty acid + H(+). It carries out the reaction 1,2-dihexadecanoyl-sn-glycero-3-phosphocholine + H2O = 1-hexadecanoyl-sn-glycero-3-phosphocholine + hexadecanoate + H(+). The enzyme catalyses 1,2-dihexadecanoyl-sn-glycero-3-phosphocholine + H2O = 2-hexadecanoyl-sn-glycero-3-phosphocholine + hexadecanoate + H(+). It catalyses the reaction 1-hexadecanoyl-2-(9Z-octadecenoyl)-sn-glycero-3-phosphocholine + H2O = 2-(9Z-octadecenoyl)-sn-glycero-3-phosphocholine + hexadecanoate + H(+). The catalysed reaction is 1-hexadecanoyl-2-(9Z-octadecenoyl)-sn-glycero-3-phosphocholine + H2O = 1-hexadecanoyl-sn-glycero-3-phosphocholine + (9Z)-octadecenoate + H(+). It carries out the reaction 1-hexadecanoyl-2-(5Z,8Z,11Z,14Z-eicosatetraenoyl)-sn-glycero-3-phosphocholine + H2O = 1-hexadecanoyl-sn-glycero-3-phosphocholine + (5Z,8Z,11Z,14Z)-eicosatetraenoate + H(+). The enzyme catalyses 1-hexadecanoyl-2-(5Z,8Z,11Z,14Z-eicosatetraenoyl)-sn-glycero-3-phosphocholine + H2O = 2-(5Z,8Z,11Z,14Z)-eicosatetraenoyl-sn-glycero-3-phosphocholine + hexadecanoate + H(+). It catalyses the reaction 1-hexadecanoyl-2-(9Z,12Z-octadecadienoyl)-sn-glycero-3-phosphoethanolamine + H2O = 1-hexadecanoyl-sn-glycero-3-phosphoethanolamine + (9Z,12Z)-octadecadienoate + H(+). The catalysed reaction is 1-hexadecanoyl-2-(9Z,12Z-octadecadienoyl)-sn-glycero-3-phosphoethanolamine + H2O = 2-(9Z,12Z)-octadecadienoyl-sn-glycero-3-phosphoethanolamine + hexadecanoate + H(+). It carries out the reaction 1-hexadecanoyl-2-(5Z,8Z,11Z,14Z-eicosatetraenoyl)-sn-glycero-3-phosphoethanolamine + H2O = 1-hexadecanoyl-sn-glycero-3-phosphoethanolamine + (5Z,8Z,11Z,14Z)-eicosatetraenoate + H(+). The enzyme catalyses 1-hexadecanoyl-2-(5Z,8Z,11Z,14Z-eicosatetraenoyl)-sn-glycero-3-phosphoethanolamine + H2O = 2-(5Z,8Z,11Z,14Z)-eicosatetraenoyl-sn-glycero-3-phosphoethanolamine + hexadecanoate + H(+). It catalyses the reaction 1-hexanoyl-2-acyl-sn-glycero-3-phosphocholine + H2O = hexanoate + a 2-acyl-sn-glycero-3-phosphocholine + H(+). The catalysed reaction is 1-hexanoyl-2-acyl-sn-glycero-3-phosphocholine + H2O = 1-hexanoyl-sn-glycero-3-phosphocholine + a fatty acid + H(+). It carries out the reaction 1,2-diheptadecanoyl-sn-glycero-3-phosphoethanolamine + 1-(9Z-octadecenoyl)-2-hexadecanoyl-sn-glycero-3-phosphocholine = 1,2-diheptadecanoyl-sn-glycero-3-phospho-N-hexadecanoyl-ethanolamine + 1-(9Z-octadecenoyl)-sn-glycero-3-phosphocholine + H(+). The enzyme catalyses 1,2-diheptadecanoyl-sn-glycero-3-phosphoethanolamine + 1-(9Z-octadecenoyl)-2-hexadecanoyl-sn-glycero-3-phosphocholine = 1,2-diheptadecanoyl-sn-glycero-3-phospho-N-(9Z-octadecenoyl)-ethanolamine + 2-hexadecanoyl-sn-glycero-3-phosphocholine + H(+). It catalyses the reaction 1,2-dihexanoyl-sn-glycero-3-phosphoethanolamine + 2-heptanoyl-sn-glycero-3-phosphocholine = hexanoyl-sn-glycero-3-phosphoethanolamine + 1-hexanoyl-2-heptanoyl-sn-glycero-3-phosphocholine. The catalysed reaction is 1-hexadecanoyl-2-octadecanoyl-sn-glycero-3-phosphocholine + H2O = octadecanoate + 1-hexadecanoyl-sn-glycero-3-phosphocholine + H(+). It carries out the reaction 1-hexadecanoyl-2-octadecanoyl-sn-glycero-3-phosphocholine + H2O = 2-octadecanoyl-sn-glycero-3-phosphocholine + hexadecanoate + H(+). The enzyme catalyses 1-octadecanoyl-2-hexadecanoyl-sn-glycero-3-phosphocholine + H2O = 1-octadecanoyl-sn-glycero-3-phosphocholine + hexadecanoate + H(+). It catalyses the reaction 1-octadecanoyl-2-hexadecanoyl-sn-glycero-3-phosphocholine + H2O = 2-hexadecanoyl-sn-glycero-3-phosphocholine + octadecanoate + H(+). The catalysed reaction is 1-hexadecanoyl-2-(9Z,12Z-octadecadienoyl)-sn-glycero-3-phosphocholine + H2O = (9Z,12Z)-octadecadienoate + 1-hexadecanoyl-sn-glycero-3-phosphocholine + H(+). It carries out the reaction 1-hexadecanoyl-2-(9Z,12Z-octadecadienoyl)-sn-glycero-3-phosphocholine + H2O = 2-(9Z,12Z-octadecadienoyl)-sn-glycero-3-phosphocholine + hexadecanoate + H(+). The enzyme catalyses 1,2-di-(9Z-octadecenoyl)-sn-glycero-3-phosphocholine + H2O = 2-(9Z-octadecenoyl)-sn-glycero-3-phosphocholine + (9Z)-octadecenoate + H(+). It catalyses the reaction 1,2-dihexadecanoyl-sn-glycero-3-phosphocholine + H2O = hexadecanoyl-sn-glycero-3-phosphocholine + hexadecanoate + H(+). The catalysed reaction is 1,2-di-(9Z-octadecenoyl)-sn-glycero-3-phosphocholine + H2O = 1-(9Z-octadecenoyl)-sn-glycero-3-phosphocholine + (9Z)-octadecenoate + H(+). It carries out the reaction 1,2-di-(9Z-octadecenoyl)-sn-glycero-3-phosphoethanolamine + 1,2-dihexadecanoyl-sn-glycero-3-phosphocholine = hexadecanoyl-sn-glycero-3-phosphocholine + N-hexadecanoyl-1,2-di-(9Z-octadecenoyl)-sn-glycero-3-phosphoethanolamine + H(+). The enzyme catalyses 1,2-di-(9Z,12Z-octadecadienoyl)-sn-glycero-3-phosphocholine + H2O = 1-(9Z,12Z)-octadecadienoyl-sn-glycero-3-phosphocholine + (9Z,12Z)-octadecadienoate + H(+). Its function is as follows. Exhibits both phospholipase A1/2 and acyltransferase activities. Shows phospholipase A1 (PLA1) and A2 (PLA2), catalyzing the calcium-independent release of fatty acids from the sn-1 or sn-2 position of glycerophospholipids. For most substrates, PLA1 activity is much higher than PLA2 activity. Shows O-acyltransferase activity, catalyzing the transfer of a fatty acyl group from glycerophospholipid to the hydroxyl group of lysophospholipid. Shows N-acyltransferase activity,catalyzing the calcium-independent transfer of a fatty acyl group at the sn-1 position of phosphatidylcholine (PC) and other glycerophospholipids to the primary amine of phosphatidylethanolamine (PE), forming N-acylphosphatidylethanolamine (NAPE), which serves as precursor for N-acylethanolamines (NAEs). Exhibits high N-acyltransferase activity and low phospholipase A1/2 activity. Required for complete organelle rupture and degradation that occur during eye lens terminal differentiation, when fiber cells that compose the lens degrade all membrane-bound organelles in order to provide lens with transparency to allow the passage of light. Organelle membrane degradation is probably catalyzed by the phospholipase activity. In terms of biological role, (Microbial infection) Acts as a host factor for picornaviruses: required during early infection to promote viral genome release into the cytoplasm. The chain is Phospholipase A and acyltransferase 3 from Mus musculus (Mouse).